We begin with the raw amino-acid sequence, 92 residues long: Protein S100-A5 (92 aa).

2 consecutive EF-hand domains span residues 12 to 47 (MVTTFHKYSGREGSKLTLSRKELKELIKKELCLGEM) and 47 to 82 (MKESSIDDLMKSLDKNSDQEIDFKEYSVFLTMLCMA). Positions 28, 33, 60, 62, 64, 66, and 71 each coordinate Ca(2+).

The protein belongs to the S-100 family. In terms of assembly, homodimer.

Functionally, binds calcium, zinc and copper. One subunit can simultaneously bind 2 calcium ions or 2 copper ions plus 1 zinc ion. Calcium and copper ions compete for the same binding sites. The polypeptide is Protein S100-A5 (S100A5) (Homo sapiens (Human)).